The primary structure comprises 366 residues: Isocitrate dehydrogenase [NAD] subunit alpha, mitochondrial (366 aa).

The transit peptide at 1 to 27 (MAGSAWVSKVSRLLGAFHNTKQVTRGF) directs the protein to the mitochondrion. Lys-77 bears the N6-succinyllysine mark. Thr-101 bears the Phosphothreonine mark. The substrate site is built by Arg-115, Arg-125, and Arg-146. Lys-223 is modified (N6-acetyllysine). Asp-233, Asp-257, and Asp-261 together coordinate Mg(2+). The residue at position 343 (Lys-343) is an N6-acetyllysine; alternate. Lys-343 bears the N6-succinyllysine; alternate mark. The residue at position 350 (Lys-350) is an N6-succinyllysine.

It belongs to the isocitrate and isopropylmalate dehydrogenases family. In terms of assembly, heterooligomer of subunits alpha (IDH3A), beta (IDH3B), and gamma (IDH3G) in the apparent ratio of 2:1:1. The heterodimer containing one IDH3A and one IDH3B subunit and the heterodimer containing one IDH3A and one IDH3G subunit assemble into a heterotetramer (which contains two subunits of IDH3A, one of IDH3B and one of IDH3G) and further into the heterooctamer. Mg(2+) is required as a cofactor. The cofactor is Mn(2+). As to expression, expressed in brown adipose tissue (BAT).

The protein localises to the mitochondrion. It catalyses the reaction D-threo-isocitrate + NAD(+) = 2-oxoglutarate + CO2 + NADH. Its activity is regulated as follows. The heterotetramer and the heterodimer composed of IDH3A and IDH3G subunits can be allosterically activated by citrate (CIT) or/and ADP, and the two activators can act independently or synergistically. The heterodimer composed of IDH3A and IDH3B subunits cannot be allosterically regulated and the allosteric regulation of the heterotetramer is through the IDH3G subunit and not the IDH3B subunit. The IDH3G subunit contains the allosteric site which consists of a CIT-binding site and an ADP-binding site, and the binding of CIT and ADP causes conformational changes at the allosteric site which are transmitted to the active site in the catalytic subunit (IDH3A) through a cascade of conformational changes at the heterodimer interface, leading to stabilization of the isocitrate-binding at the active site and thus activation of the enzyme. ATP can activate the heterotetramer and the heterodimer composed of IDH3A and IDH3G subunits at low concentrations but inhibits their activities at high concentrations, whereas ATP exhibits only inhibitory effect on the heterodimer composed of IDH3A and IDH3B subunits. Its function is as follows. Catalytic subunit of the enzyme which catalyzes the decarboxylation of isocitrate (ICT) into alpha-ketoglutarate. The heterodimer composed of the alpha (IDH3A) and beta (IDH3B) subunits and the heterodimer composed of the alpha (IDH3A) and gamma (IDH3G) subunits, have considerable basal activity but the full activity of the heterotetramer (containing two subunits of IDH3A, one of IDH3B and one of IDH3G) requires the assembly and cooperative function of both heterodimers. This chain is Isocitrate dehydrogenase [NAD] subunit alpha, mitochondrial, found in Rattus norvegicus (Rat).